The sequence spans 551 residues: Hydroxymethylpyrimidine/phosphomethylpyrimidine kinase THI21 (551 aa).

Gln-64 lines the 4-amino-5-hydroxymethyl-2-methylpyrimidine pocket.

In the N-terminal section; belongs to the ThiD family. The protein in the C-terminal section; belongs to the thiaminase-2 family.

The catalysed reaction is 4-amino-5-hydroxymethyl-2-methylpyrimidine + ATP = 4-amino-2-methyl-5-(phosphooxymethyl)pyrimidine + ADP + H(+). It carries out the reaction 4-amino-2-methyl-5-(phosphooxymethyl)pyrimidine + ATP = 4-amino-2-methyl-5-(diphosphooxymethyl)pyrimidine + ADP. Its pathway is cofactor biosynthesis; thiamine diphosphate biosynthesis; 4-amino-2-methyl-5-diphosphomethylpyrimidine from 5-amino-1-(5-phospho-D-ribosyl)imidazole: step 2/3. It participates in cofactor biosynthesis; thiamine diphosphate biosynthesis; 4-amino-2-methyl-5-diphosphomethylpyrimidine from 5-amino-1-(5-phospho-D-ribosyl)imidazole: step 3/3. In terms of biological role, catalyzes the phosphorylation of hydroxymethylpyrimidine phosphate (HMP-P) to HMP-PP, and also probably that of HMP to HMP-P. The protein is Hydroxymethylpyrimidine/phosphomethylpyrimidine kinase THI21 (THI21) of Saccharomyces cerevisiae (strain ATCC 204508 / S288c) (Baker's yeast).